The primary structure comprises 274 residues: Large ribosomal subunit protein uL2 (274 aa).

Disordered stretches follow at residues 28-55 (APHA…RHVG) and 224-274 (VAMN…RRRK).

It belongs to the universal ribosomal protein uL2 family. As to quaternary structure, part of the 50S ribosomal subunit. Forms a bridge to the 30S subunit in the 70S ribosome.

Its function is as follows. One of the primary rRNA binding proteins. Required for association of the 30S and 50S subunits to form the 70S ribosome, for tRNA binding and peptide bond formation. It has been suggested to have peptidyltransferase activity; this is somewhat controversial. Makes several contacts with the 16S rRNA in the 70S ribosome. This is Large ribosomal subunit protein uL2 from Pseudomonas putida (strain ATCC 47054 / DSM 6125 / CFBP 8728 / NCIMB 11950 / KT2440).